The following is a 56-amino-acid chain: Male determiner protein Yob (56 aa).

Its function is as follows. Male determiner protein (M-factor) that controls male somatic sexual differentiation. Acts as a dominant factor that regulates the mRNA splicing of doublesex (dsx) transcripts and promotes expression of male splice forms of dsx. The protein is Male determiner protein Yob of Anopheles gambiae (African malaria mosquito).